The sequence spans 272 residues: MAHLATVVLLLVAAARQAPLAAGDHSANPRLPTCAAAPDVAAPQEHGDGGGVGGGRRILDITHAVRAELPVLGSCDGVGALVRLKKSMANGSRSNLSELRMSVHTGTHVDAPGHMWQPHFDAGLDVDTLDLGLLNGPALLVDVPRHSNVTAEVMESLNIPRGVRRVLFRTMNTDKRLMWQKESDLSFVGFTEDGAQWLVGYTDIKLVGVDYLSVASYEHMIPAHVVFLKSKEIVIVEALKLDDVEPGMYMLHCLPLRLAGAEGSPVRCILIK.

The first 17 residues, 1–17 (MAHLATVVLLLVAAARQ), serve as a signal peptide directing secretion.

Belongs to the Cyclase 1 superfamily. Highly expressed in leaf sheaths and flag leaves. Expressed in roots, stems, leaf collars, glumes, young panicles and pistils.

Its subcellular location is the secreted. It is found in the extracellular space. It localises to the extracellular matrix. Functionally, may be involved in response to stresses. The polypeptide is Cyclase-like protein 2 (Oryza sativa subsp. japonica (Rice)).